Reading from the N-terminus, the 209-residue chain is Outer-membrane lipoprotein LolB (209 aa).

Residues 1-17 (MKKSTLLFSLMAMALSG) form the signal peptide. The N-palmitoyl cysteine moiety is linked to residue Cys-18. Cys-18 carries the S-diacylglycerol cysteine lipid modification.

Belongs to the LolB family. In terms of assembly, monomer.

The protein localises to the cell outer membrane. Its function is as follows. Plays a critical role in the incorporation of lipoproteins in the outer membrane after they are released by the LolA protein. This is Outer-membrane lipoprotein LolB from Haemophilus ducreyi (strain 35000HP / ATCC 700724).